A 440-amino-acid polypeptide reads, in one-letter code: Nuclear fusion protein BIK1 (440 aa).

A CAP-Gly domain is found at 26–69; it reads GPVDTKAGMFAGVDLLANIGKNDGSFMGKKYFQTEYPQSGLFIQ. Phosphoserine occurs at positions 95 and 110. Residues 108 to 157 are disordered; that stretch reads QFSPMDDPKSPTPMRSFRITSRHSGNQQSMDQEASDHHQQQEFGYDNRED. Residues 125–139 are compositionally biased toward polar residues; it reads RITSRHSGNQQSMDQ. A compositionally biased stretch (basic and acidic residues) spans 141–157; that stretch reads ASDHHQQQEFGYDNRED. Positions 190-397 form a coiled coil; that stretch reads NSSEVTIELR…AQAQTAVESL (208 aa). The CCHC-box motif lies at 416 to 429; it reads CEHCDTMGHNTAEC.

It is found in the cytoplasm. The protein resides in the cytoskeleton. Its subcellular location is the microtubule organizing center. The protein localises to the spindle pole body. It localises to the spindle. Its function is as follows. Required for nuclear fusion, chromosome disjunction, and nuclear segregation during mitosis. Probably required for the formation or stabilization of microtubules during mitosis and for spindle pole body fusion during conjugation. In Saccharomyces cerevisiae (strain ATCC 204508 / S288c) (Baker's yeast), this protein is Nuclear fusion protein BIK1 (BIK1).